Reading from the N-terminus, the 156-residue chain is ATP synthase subunit b (156 aa).

The helical transmembrane segment at 12–32 threads the bilayer; the sequence is VAFLIFVLFCMKFIWPPVIAA.

The protein belongs to the ATPase B chain family. F-type ATPases have 2 components, F(1) - the catalytic core - and F(0) - the membrane proton channel. F(1) has five subunits: alpha(3), beta(3), gamma(1), delta(1), epsilon(1). F(0) has three main subunits: a(1), b(2) and c(10-14). The alpha and beta chains form an alternating ring which encloses part of the gamma chain. F(1) is attached to F(0) by a central stalk formed by the gamma and epsilon chains, while a peripheral stalk is formed by the delta and b chains.

Its subcellular location is the cell inner membrane. Its function is as follows. F(1)F(0) ATP synthase produces ATP from ADP in the presence of a proton or sodium gradient. F-type ATPases consist of two structural domains, F(1) containing the extramembraneous catalytic core and F(0) containing the membrane proton channel, linked together by a central stalk and a peripheral stalk. During catalysis, ATP synthesis in the catalytic domain of F(1) is coupled via a rotary mechanism of the central stalk subunits to proton translocation. Functionally, component of the F(0) channel, it forms part of the peripheral stalk, linking F(1) to F(0). The protein is ATP synthase subunit b of Pseudomonas fluorescens (strain ATCC BAA-477 / NRRL B-23932 / Pf-5).